The primary structure comprises 179 residues: Large ribosomal subunit protein uL6 (179 aa).

It belongs to the universal ribosomal protein uL6 family. In terms of assembly, part of the 50S ribosomal subunit.

Functionally, this protein binds to the 23S rRNA, and is important in its secondary structure. It is located near the subunit interface in the base of the L7/L12 stalk, and near the tRNA binding site of the peptidyltransferase center. The sequence is that of Large ribosomal subunit protein uL6 from Mycolicibacterium gilvum (strain PYR-GCK) (Mycobacterium gilvum (strain PYR-GCK)).